Reading from the N-terminus, the 155-residue chain is Ribosome maturation factor RimP (155 aa).

It belongs to the RimP family.

The protein resides in the cytoplasm. Required for maturation of 30S ribosomal subunits. The polypeptide is Ribosome maturation factor RimP (Desulforapulum autotrophicum (strain ATCC 43914 / DSM 3382 / VKM B-1955 / HRM2) (Desulfobacterium autotrophicum)).